Here is a 909-residue protein sequence, read N- to C-terminus: Glucan endo-1,3-beta-D-glucosidase ARB_01444 (909 aa).

The first 23 residues, 1–23, serve as a signal peptide directing secretion; it reads MKPYTTLPGVAVLVSLLTQSAHA. The tract at residues 136-187 is disordered; sequence KRSPAPQRHPPAPTKATAGYQFTNCTSTSNPGPTATSPTSGIPSQPSAPPAT. Polar residues predominate over residues 155 to 180; it reads YQFTNCTSTSNPGPTATSPTSGIPSQ. N-linked (GlcNAc...) asparagine glycosylation is found at Asn-159, Asn-239, and Asn-259. Residues 191 to 430 form a beta-sandwich subdomain region; sequence QDIFQPIAKD…KGVIQVAKNP (240 aa). The GH81 domain occupies 191 to 909; sequence QDIFQPIAKD…AGEYSTYIAL (719 aa). Residues 431-524 are alpha/beta subdomain; it reads SAEEGEGIYD…GDSWTMVEGN (94 aa). The (alpha/beta)6 barrel subdomain stretch occupies residues 539-909; it reads SSQVTLSEGA…AGEYSTYIAL (371 aa). Residue Asp-654 is part of the active site. Residues His-658, Asp-727, Glu-729, and Glu-733 each contribute to the (1,3-beta-D-glucosyl)n site. Residues Glu-729 and Glu-733 contribute to the active site. The may provide specificity for triple-helical beta-glucan stretch occupies residues 798–800; sequence KID. Tyr-811 contacts (1,3-beta-D-glucosyl)n.

It belongs to the glycosyl hydrolase 81 family.

It is found in the secreted. Its subcellular location is the cell wall. It carries out the reaction Hydrolysis of (1-&gt;3)-beta-D-glucosidic linkages in (1-&gt;3)-beta-D-glucans.. In terms of biological role, cleaves internal linkages in 1,3-beta-glucan. Probably involved in cell separation after cytokinesis. The polypeptide is Glucan endo-1,3-beta-D-glucosidase ARB_01444 (Arthroderma benhamiae (strain ATCC MYA-4681 / CBS 112371) (Trichophyton mentagrophytes)).